We begin with the raw amino-acid sequence, 91 residues long: Small ribosomal subunit protein uS19 (91 aa).

Belongs to the universal ribosomal protein uS19 family.

In terms of biological role, protein S19 forms a complex with S13 that binds strongly to the 16S ribosomal RNA. The sequence is that of Small ribosomal subunit protein uS19 from Ectopseudomonas mendocina (strain ymp) (Pseudomonas mendocina).